Consider the following 521-residue polypeptide: Glutamate--tRNA ligase (521 aa).

Positions 13–23 (PSPSGFLHVGG) match the 'HIGH' region motif. Residues 253–257 (KLSKR) carry the 'KMSKS' region motif. Lys-256 lines the ATP pocket.

This sequence belongs to the class-I aminoacyl-tRNA synthetase family. Glutamate--tRNA ligase type 1 subfamily. In terms of assembly, monomer.

Its subcellular location is the cytoplasm. The catalysed reaction is tRNA(Glu) + L-glutamate + ATP = L-glutamyl-tRNA(Glu) + AMP + diphosphate. Its function is as follows. Catalyzes the attachment of glutamate to tRNA(Glu) in a two-step reaction: glutamate is first activated by ATP to form Glu-AMP and then transferred to the acceptor end of tRNA(Glu). This is Glutamate--tRNA ligase from Leptospira interrogans serogroup Icterohaemorrhagiae serovar copenhageni (strain Fiocruz L1-130).